A 170-amino-acid polypeptide reads, in one-letter code: Phosphopantetheine adenylyltransferase (170 aa).

A substrate-binding site is contributed by T9. ATP-binding positions include T9–F10 and H17. Substrate is bound by residues K41, L73, and R87. ATP-binding positions include G88–R90, E98, and Y123–T129.

Belongs to the bacterial CoaD family. Homohexamer. It depends on Mg(2+) as a cofactor.

The protein resides in the cytoplasm. The enzyme catalyses (R)-4'-phosphopantetheine + ATP + H(+) = 3'-dephospho-CoA + diphosphate. The protein operates within cofactor biosynthesis; coenzyme A biosynthesis; CoA from (R)-pantothenate: step 4/5. In terms of biological role, reversibly transfers an adenylyl group from ATP to 4'-phosphopantetheine, yielding dephospho-CoA (dPCoA) and pyrophosphate. This chain is Phosphopantetheine adenylyltransferase, found in Bordetella petrii (strain ATCC BAA-461 / DSM 12804 / CCUG 43448).